The chain runs to 67 residues: Brevinin-1CDYc (67 aa).

The N-terminal stretch at 1–22 (MFTLKKSLLLIFFLGTINLSLC) is a signal peptide. A propeptide spanning residues 23–45 (EEERNADEEERRDDPEERDVEVE) is cleaved from the precursor. C61 and C67 form a disulfide bridge.

The protein belongs to the frog skin active peptide (FSAP) family. Brevinin subfamily. Expressed by the skin glands.

The protein resides in the secreted. In terms of biological role, antimicrobial peptide. This chain is Brevinin-1CDYc, found in Rana huanrensis (Huanren frog).